Here is a 344-residue protein sequence, read N- to C-terminus: Phosphoribosylformylglycinamidine cyclo-ligase (344 aa).

Belongs to the AIR synthase family.

The protein resides in the cytoplasm. It catalyses the reaction 2-formamido-N(1)-(5-O-phospho-beta-D-ribosyl)acetamidine + ATP = 5-amino-1-(5-phospho-beta-D-ribosyl)imidazole + ADP + phosphate + H(+). It functions in the pathway purine metabolism; IMP biosynthesis via de novo pathway; 5-amino-1-(5-phospho-D-ribosyl)imidazole from N(2)-formyl-N(1)-(5-phospho-D-ribosyl)glycinamide: step 2/2. This Neisseria meningitidis serogroup C / serotype 2a (strain ATCC 700532 / DSM 15464 / FAM18) protein is Phosphoribosylformylglycinamidine cyclo-ligase.